We begin with the raw amino-acid sequence, 124 residues long: UPF0102 protein PP_1324 (124 aa).

Belongs to the UPF0102 family.

The chain is UPF0102 protein PP_1324 from Pseudomonas putida (strain ATCC 47054 / DSM 6125 / CFBP 8728 / NCIMB 11950 / KT2440).